The following is a 508-amino-acid chain: Aromatase (508 aa).

Cysteine 437 is a binding site for heme.

It belongs to the cytochrome P450 family. The cofactor is heme.

The protein resides in the membrane. The enzyme catalyses testosterone + 3 reduced [NADPH--hemoprotein reductase] + 3 O2 = 17beta-estradiol + formate + 3 oxidized [NADPH--hemoprotein reductase] + 4 H2O + 4 H(+). It catalyses the reaction androst-4-ene-3,17-dione + 3 reduced [NADPH--hemoprotein reductase] + 3 O2 = estrone + formate + 3 oxidized [NADPH--hemoprotein reductase] + 4 H2O + 4 H(+). Catalyzes the formation of aromatic C18 estrogens from C19 androgens. The polypeptide is Aromatase (Cyp19a1) (Rattus norvegicus (Rat)).